A 408-amino-acid polypeptide reads, in one-letter code: E3 ubiquitin-protein ligase At1g12760 (408 aa).

Residues methionine 1–arginine 52 form a disordered region. Low complexity predominate over residues serine 10–glycine 34. 2 helical membrane passes run valine 100–valine 120 and valine 133–tyrosine 153. Residues arginine 160–serine 195 are disordered. Low complexity predominate over residues arginine 163–serine 183. 3 helical membrane passes run alanine 219–glycine 239, isoleucine 254–isoleucine 274, and glycine 275–glutamine 295. The segment at cysteine 353–lysine 394 adopts an RING-type; atypical zinc-finger fold.

It localises to the membrane. The catalysed reaction is S-ubiquitinyl-[E2 ubiquitin-conjugating enzyme]-L-cysteine + [acceptor protein]-L-lysine = [E2 ubiquitin-conjugating enzyme]-L-cysteine + N(6)-ubiquitinyl-[acceptor protein]-L-lysine.. The protein operates within protein modification; protein ubiquitination. In terms of biological role, mediates E2-dependent protein ubiquitination in vitro. This chain is E3 ubiquitin-protein ligase At1g12760, found in Arabidopsis thaliana (Mouse-ear cress).